The sequence spans 398 residues: GATA transcription factor 21 (398 aa).

Residues 20 to 51 (QPFFYPLGSSSSLHHHHHHHHHQVPSNSSSSS) are disordered. Positions 32–42 (LHHHHHHHHHQ) are enriched in basic residues. The Nuclear localization signal signature appears at 109 to 116 (PKKETRLK). A disordered region spans residues 122–144 (KDHEDQPHPLHQNPTKPDSDSDK). A GATA-type zinc finger spans residues 226–280 (NGVIRVCSDCNTTKTPLWRSGPRGPKSLCNACGIRQRKARRAAMAAAAAAGDQEV). A disordered region spans residues 289 to 353 (LPLKKKLQNK…KSTTSSNSSI (65 aa)). The span at 291 to 302 (LKKKLQNKKKRS) shows a compositional bias: basic residues. The span at 343 to 353 (SKSTTSSNSSI) shows a compositional bias: low complexity.

Belongs to the type IV zinc-finger family. Class B subfamily. Interacts with SNL1. Forms heterodimers with GATA18. As to expression, expressed predominantly in leaves, and barely in stems, flowers and siliques.

It is found in the nucleus. Transcriptional regulator that specifically binds 5'-GATA-3' or 5'-GAT-3' motifs within gene promoters. Involved in the modulation of chloroplast development, growth and division in a cytokinin-dependent manner. Repressor of the gibberellic acid (GA) signaling pathway that represses flowering and modulates greening, in a SOC1-dependent manner. Prevents the accumulation of SOC1 during flowering. Promotes chlorophyll biosynthesis throughout the plant, by regulating chlorophyll biosynthetic genes (e.g. HEMA1 and GUN4) and chloroplast localized glutamate synthase (e.g. GLU1). Involved in the regulation of sugar-sensing genes (e.g. HXK1, HXK2, STP13 and PLT6). Regulator of germination, senescence, elongation growth and flowering time. Also influences leaf starch content. The sequence is that of GATA transcription factor 21 from Arabidopsis thaliana (Mouse-ear cress).